Consider the following 195-residue polypeptide: ALK and LTK ligand 2b (195 aa).

Intrachain disulfides connect Cys156/Cys192 and Cys170/Cys179.

The protein belongs to the ALKAL family. In terms of assembly, homodimer. Highly expressed in the swim bladder and single cells of unknown identity in the head.

It localises to the secreted. Its subcellular location is the cell membrane. Functionally, cytokine that acts as a physiological ligand for receptor tyrosine kinases LTK and ALK. Required for neural crest cell differentiation and iridophore development during embryonic iridophore development and adult stripe development by acting as a receptor for LTK. Also required for iridophore formation in the adult eye. This chain is ALK and LTK ligand 2b, found in Danio rerio (Zebrafish).